A 660-amino-acid polypeptide reads, in one-letter code: DNA mismatch repair protein MutL (660 aa).

This sequence belongs to the DNA mismatch repair MutL/HexB family.

This protein is involved in the repair of mismatches in DNA. It is required for dam-dependent methyl-directed DNA mismatch repair. May act as a 'molecular matchmaker', a protein that promotes the formation of a stable complex between two or more DNA-binding proteins in an ATP-dependent manner without itself being part of a final effector complex. In Streptococcus equi subsp. zooepidemicus (strain MGCS10565), this protein is DNA mismatch repair protein MutL.